The following is a 387-amino-acid chain: N-acetylglucosamine-6-phosphate deacetylase (387 aa).

The a divalent metal cation site is built by His62, His64, and Glu132. Residue Ala143–Gln144 coordinates substrate. Positions 198 and 219 each coordinate a divalent metal cation. Substrate-binding positions include Asn222 to Gln223, Arg230, and Asp251 to His254. A divalent metal cation is bound at residue Asp277. Asp277 (proton donor/acceptor) is an active-site residue. Position 310-312 (Leu310–Gly312) interacts with substrate.

Belongs to the metallo-dependent hydrolases superfamily. NagA family. In terms of assembly, homodimer. Requires a divalent metal cation as cofactor.

It catalyses the reaction N-acetyl-D-glucosamine 6-phosphate + H2O = D-glucosamine 6-phosphate + acetate. The protein operates within amino-sugar metabolism; N-acetylneuraminate degradation; D-fructose 6-phosphate from N-acetylneuraminate: step 4/5. Its function is as follows. Involved in the first committed step in the biosynthesis of amino-sugar-nucleotides. Catalyzes the hydrolysis of the N-acetyl group of N-acetylglucosamine-6-phosphate (GlcNAc-6-P) to yield glucosamine 6-phosphate and acetate. This Lysinibacillus sphaericus (Bacillus sphaericus) protein is N-acetylglucosamine-6-phosphate deacetylase (nagA).